Here is a 345-residue protein sequence, read N- to C-terminus: L-threonine 3-dehydrogenase (345 aa).

C42 provides a ligand contact to Zn(2+). Active-site charge relay system residues include T44 and H47. Zn(2+)-binding residues include H67, E68, C97, C100, C103, and C111. Residues I179, D199, R204, 266 to 268 (LGI), and 290 to 291 (IY) contribute to the NAD(+) site.

This sequence belongs to the zinc-containing alcohol dehydrogenase family. In terms of assembly, homotetramer. It depends on Zn(2+) as a cofactor.

It localises to the cytoplasm. It catalyses the reaction L-threonine + NAD(+) = (2S)-2-amino-3-oxobutanoate + NADH + H(+). It functions in the pathway amino-acid degradation; L-threonine degradation via oxydo-reductase pathway; glycine from L-threonine: step 1/2. In terms of biological role, catalyzes the NAD(+)-dependent oxidation of L-threonine to 2-amino-3-ketobutyrate. This is L-threonine 3-dehydrogenase from Sinorhizobium fredii (strain NBRC 101917 / NGR234).